The sequence spans 311 residues: Methionyl-tRNA formyltransferase (311 aa).

110–113 (SLLP) lines the (6S)-5,6,7,8-tetrahydrofolate pocket.

The protein belongs to the Fmt family.

It catalyses the reaction L-methionyl-tRNA(fMet) + (6R)-10-formyltetrahydrofolate = N-formyl-L-methionyl-tRNA(fMet) + (6S)-5,6,7,8-tetrahydrofolate + H(+). Functionally, attaches a formyl group to the free amino group of methionyl-tRNA(fMet). The formyl group appears to play a dual role in the initiator identity of N-formylmethionyl-tRNA by promoting its recognition by IF2 and preventing the misappropriation of this tRNA by the elongation apparatus. The polypeptide is Methionyl-tRNA formyltransferase (Streptococcus pneumoniae serotype 2 (strain D39 / NCTC 7466)).